The chain runs to 252 residues: Flagellar brake protein YcgR (252 aa).

Positions glutamine 118–glutamate 236 constitute a PilZ domain.

This sequence belongs to the YcgR family. As to quaternary structure, monomer. Interacts with the flagellar basal bodies.

It localises to the bacterial flagellum basal body. Its function is as follows. Acts as a flagellar brake, regulating swimming and swarming in a bis-(3'-5') cyclic diguanylic acid (c-di-GMP)-dependent manner. Binds 1 c-di-GMP dimer per subunit. Increasing levels of c-di-GMP lead to decreased motility. The sequence is that of Flagellar brake protein YcgR from Yersinia pseudotuberculosis serotype I (strain IP32953).